The sequence spans 345 residues: Metal-dependent phosphohydrolase cns2 (345 aa).

An HD domain is found at 70-171; that stretch reads RLEHSVGAFI…QLCADRLDYA (102 aa).

As to quaternary structure, interacts with cns1.

It localises to the lipid droplet. It participates in secondary metabolite biosynthesis. Its function is as follows. Metal-dependent phosphohydrolase; part of the gene cluster that mediates the biosynthesis of cordycepin (COR) and pentostatin (PTN), two adenosine analogs with related bioactivity profiles as both mimic adenosine and can inhibit some of the processes that are adenosine dependent. Within the pathway, cns2 catalyzes dephosphorylation of 3'-AMP to produce 2'-carbonyl-3'-deoxyadenosine (2'-C-3'-dA). The first step of cordycepin biosynthesis involves hydroxyl phosphorylation of the 3'-OH position on adenosine to produce adenosine-3'-monophosphate (3'-AMP), catalyzed by kinase activity of cns3. Next, 3'-AMP is dephosphorylated to 2'-carbonyl-3'-deoxyadenosine by cns2, which is finally converted to cordycepin (3'-deoxyadenosine) by the oxidoreductase cns1. This Cordyceps militaris (strain CM01) (Caterpillar fungus) protein is Metal-dependent phosphohydrolase cns2.